The following is a 150-amino-acid chain: Non-structural protein (150 aa).

The interval 93–140 is apoptotic activity; the sequence is PLFRIRFLLLIMSDSISLTDITISPGTLYSARTLLLRAAVLALTRKPM.

Disrupts the host mitochondrial membrane potential and induces apoptosis probably by inducing host CASP8 and CASP9. The sequence is that of Non-structural protein from Bos taurus (Bovine).